We begin with the raw amino-acid sequence, 406 residues long: Cysteine desulfurase (406 aa).

Lys-226 carries the N6-(pyridoxal phosphate)lysine modification. Cys-364 functions as the Cysteine persulfide intermediate in the catalytic mechanism.

This sequence belongs to the class-V pyridoxal-phosphate-dependent aminotransferase family. Csd subfamily. Homodimer. Interacts with SufE and the SufBCD complex composed of SufB, SufC and SufD. The interaction with SufE is required to mediate the direct transfer of the sulfur atom from the S-sulfanylcysteine. The cofactor is pyridoxal 5'-phosphate.

It localises to the cytoplasm. It carries out the reaction (sulfur carrier)-H + L-cysteine = (sulfur carrier)-SH + L-alanine. It catalyses the reaction L-selenocysteine + AH2 = hydrogenselenide + L-alanine + A + H(+). The protein operates within cofactor biosynthesis; iron-sulfur cluster biosynthesis. Functionally, cysteine desulfurases mobilize the sulfur from L-cysteine to yield L-alanine, an essential step in sulfur metabolism for biosynthesis of a variety of sulfur-containing biomolecules. Component of the suf operon, which is activated and required under specific conditions such as oxidative stress and iron limitation. Acts as a potent selenocysteine lyase in vitro, that mobilizes selenium from L-selenocysteine. Selenocysteine lyase activity is however unsure in vivo. This Shigella flexneri protein is Cysteine desulfurase (sufS).